A 369-amino-acid chain; its full sequence is GTPase Obg (369 aa).

In terms of domain architecture, Obg spans 1–159 (MKFIDEAKIE…RELRLELKVL (159 aa)). Residues 128-148 (IHFKSSTNRAPRQKSEGKEGE) are disordered. The 174-residue stretch at 160–333 (ADIGLLGMPN…LVTEIYDYIA (174 aa)) folds into the OBG-type G domain. GTP is bound by residues 166 to 173 (GMPNAGKS), 191 to 195 (FTTLH), 213 to 216 (DIPG), 283 to 286 (NKLD), and 314 to 316 (SAL). Mg(2+) is bound by residues Ser173 and Thr193.

Belongs to the TRAFAC class OBG-HflX-like GTPase superfamily. OBG GTPase family. As to quaternary structure, monomer. Mg(2+) serves as cofactor.

It localises to the cytoplasm. An essential GTPase which binds GTP, GDP and possibly (p)ppGpp with moderate affinity, with high nucleotide exchange rates and a fairly low GTP hydrolysis rate. Plays a role in control of the cell cycle, stress response, ribosome biogenesis and in those bacteria that undergo differentiation, in morphogenesis control. This chain is GTPase Obg, found in Herminiimonas arsenicoxydans.